The sequence spans 684 residues: Transcriptional regulatory protein RCO1 (684 aa).

Met-1 is modified (N-acetylmethionine). The segment at 1-48 (MDTSKKDTTRSPSHSNSSSPSSSSLSSSSSKEKKRPKRLSSQNVNYDL) is disordered. Residues 10-29 (RSPSHSNSSSPSSSSLSSSS) show a composition bias toward low complexity. The residue at position 68 (Ser-68) is a Phosphoserine. The segment at 260–309 (EDFCSACNQSGSFLCCDTCPKSFHFLCLDPPIDPNNLPKGDWHCNECKFK) adopts a PHD-type 1 zinc-finger fold. The PHD-type 2; atypical zinc-finger motif lies at 414-472 (FLICYKCNQTRLGSWSHPENSRLIMTCDYCQTPWHLDCVPRASFKNLGSKWKCPLHSPT). At Ser-683 the chain carries Phosphoserine.

Component of the RPD3C(S) complex composed of at least EAF3, RCO1, RPD3, SIN3, and UME1.

It localises to the nucleus. Catalytic component of the RPD3C(S) histone deacetylase complex responsible for the deacetylation of lysine residues on the N-terminal part of the core histones (H2A, H2B, H3 and H4). Histone deacetylation gives a tag for epigenetic repression and plays an important role in transcriptional regulation, cell cycle progression, DNA damage response, osmotic stress response and developmental events. In Saccharomyces cerevisiae (strain ATCC 204508 / S288c) (Baker's yeast), this protein is Transcriptional regulatory protein RCO1 (RCO1).